Consider the following 106-residue polypeptide: uncharacterized protein (106 aa).

Topologically, residues 1-6 are cytoplasmic; sequence MYQTSP. Residues 7-27 form a helical membrane-spanning segment; it reads LSLFYFQVLVPKFLECFLCFP. The Extracellular portion of the chain corresponds to 28 to 32; that stretch reads YHKIS. Residues 33–53 traverse the membrane as a helical segment; the sequence is LVALLSFFYCQLQTNMIILLS. Over 54-73 the chain is Cytoplasmic; the sequence is QIKRFLYRQIMIALKIKAKK. A helical membrane pass occupies residues 74–94; sequence FWFIFKYFNVSCDARLFNELF. Residues 95–106 lie on the Extracellular side of the membrane; that stretch reads YIFQTYVSVDSK.

The protein resides in the membrane. This is an uncharacterized protein from Saccharomyces cerevisiae (strain ATCC 204508 / S288c) (Baker's yeast).